Here is a 238-residue protein sequence, read N- to C-terminus: Pyridoxine 5'-phosphate synthase (238 aa).

Asn-6 contacts 3-amino-2-oxopropyl phosphate. 1-deoxy-D-xylulose 5-phosphate is bound at residue 8 to 9 (DH). A 3-amino-2-oxopropyl phosphate-binding site is contributed by Arg-17. The Proton acceptor role is filled by His-42. 1-deoxy-D-xylulose 5-phosphate-binding residues include Arg-44 and His-49. Glu-69 (proton acceptor) is an active-site residue. 1-deoxy-D-xylulose 5-phosphate is bound at residue Thr-99. His-190 acts as the Proton donor in catalysis. Residues Gly-191 and 212–213 (GH) contribute to the 3-amino-2-oxopropyl phosphate site.

The protein belongs to the PNP synthase family. Homooctamer; tetramer of dimers.

It is found in the cytoplasm. The enzyme catalyses 3-amino-2-oxopropyl phosphate + 1-deoxy-D-xylulose 5-phosphate = pyridoxine 5'-phosphate + phosphate + 2 H2O + H(+). Its pathway is cofactor biosynthesis; pyridoxine 5'-phosphate biosynthesis; pyridoxine 5'-phosphate from D-erythrose 4-phosphate: step 5/5. Its function is as follows. Catalyzes the complicated ring closure reaction between the two acyclic compounds 1-deoxy-D-xylulose-5-phosphate (DXP) and 3-amino-2-oxopropyl phosphate (1-amino-acetone-3-phosphate or AAP) to form pyridoxine 5'-phosphate (PNP) and inorganic phosphate. This Chlorobium phaeobacteroides (strain BS1) protein is Pyridoxine 5'-phosphate synthase.